We begin with the raw amino-acid sequence, 367 residues long: Ribosomal lysine N-methyltransferase 5 (367 aa).

The segment at 55 to 74 is disordered; the sequence is EGGRKKKRVRRRNKASSVEE. Positions 58-68 are enriched in basic residues; sequence RKKKRVRRRNK. Residues W110, 170 to 172, D192, W256, and M288 contribute to the S-adenosyl-L-methionine site; that span reads GAG.

It belongs to the class I-like SAM-binding methyltransferase superfamily. RKM5 family.

Its function is as follows. S-adenosyl-L-methionine-dependent protein-lysine N-methyltransferase that monomethylates 60S ribosomal protein L1 (RPL1A and RPL1B) at 'Lys-46'. The sequence is that of Ribosomal lysine N-methyltransferase 5 (RKM5) from Saccharomyces cerevisiae (strain VIN 13) (Baker's yeast).